We begin with the raw amino-acid sequence, 357 residues long: Embryonic growth/differentiation factor 1 (357 aa).

Residues 1–23 (MLPVCHRFCDHLLLLLLLPSTTL) form the signal peptide. A propeptide spanning residues 24-237 (APAPASMGPA…RLCPLPRLRR (214 aa)) is cleaved from the precursor. An N-linked (GlcNAc...) asparagine glycan is attached at asparagine 191. Cystine bridges form between cysteine 251–cysteine 322, cysteine 280–cysteine 354, and cysteine 284–cysteine 356.

The protein belongs to the TGF-beta family. Homodimer; disulfide-linked. As to expression, expressed almost exclusively in the nervous system.

It is found in the secreted. In terms of biological role, may mediate cell differentiation events during embryonic development. The sequence is that of Embryonic growth/differentiation factor 1 (Gdf1) from Mus musculus (Mouse).